The primary structure comprises 678 residues: Glycine--tRNA ligase beta subunit (678 aa).

Belongs to the class-II aminoacyl-tRNA synthetase family. As to quaternary structure, tetramer of two alpha and two beta subunits.

Its subcellular location is the cytoplasm. It carries out the reaction tRNA(Gly) + glycine + ATP = glycyl-tRNA(Gly) + AMP + diphosphate. The sequence is that of Glycine--tRNA ligase beta subunit from Streptococcus pneumoniae (strain Taiwan19F-14).